The following is a 298-amino-acid chain: N-acetylmuramic acid 6-phosphate etherase (298 aa).

An SIS domain is found at 55-218 (IHTQVSGGGR…STGLMIKSGK (164 aa)). The active-site Proton donor is Glu-83. The active site involves Glu-114.

Belongs to the GCKR-like family. MurNAc-6-P etherase subfamily. As to quaternary structure, homodimer.

It catalyses the reaction N-acetyl-D-muramate 6-phosphate + H2O = N-acetyl-D-glucosamine 6-phosphate + (R)-lactate. It participates in amino-sugar metabolism; 1,6-anhydro-N-acetylmuramate degradation. It functions in the pathway amino-sugar metabolism; N-acetylmuramate degradation. Its pathway is cell wall biogenesis; peptidoglycan recycling. Specifically catalyzes the cleavage of the D-lactyl ether substituent of MurNAc 6-phosphate, producing GlcNAc 6-phosphate and D-lactate. Together with AnmK, is also required for the utilization of anhydro-N-acetylmuramic acid (anhMurNAc) either imported from the medium or derived from its own cell wall murein, and thus plays a role in cell wall recycling. This is N-acetylmuramic acid 6-phosphate etherase from Escherichia coli O127:H6 (strain E2348/69 / EPEC).